We begin with the raw amino-acid sequence, 129 residues long: Insulin-like growth factor 2 (129 aa).

A signal peptide spans 1–24 (MGVPMGKSLLAPLTFLALASCCFA). A b region spans residues 25–52 (AYRPSETLCGGELVDTLQFVCGDRGFYF). 3 cysteine pairs are disulfide-bonded: Cys33–Cys72, Cys45–Cys85, and Cys71–Cys76. The interval 53-65 (SRPASRVSRRSSR) is c. Residues 66–86 (GIVEECCFRSCDLALLETYCA) are a. The d stretch occupies residues 87–92 (TPAKSE). A propeptide spans 93-129 (RDVSTPPTVLPDNFPRYPVGKFFQYDTWKQSAQRLRR) (e peptide).

Belongs to the insulin family. In terms of assembly, interacts with MYORG; this interaction is required for IGF2 secretion. Interacts with integrins ITGAV:ITGB3 and ITGA6:ITGB4; integrin-binding is required for IGF2 signaling. Proteolytically processed by PCSK4, proIGF2 is cleaved at Arg-129 and Arg-92 to generate big-IGF2 and mature IGF2.

It is found in the secreted. In terms of biological role, the insulin-like growth factors possess growth-promoting activity. Major fetal growth hormone in mammals. Plays a key role in regulating fetoplacental development. IGF2 is influenced by placental lactogen. Also involved in tissue differentiation. In adults, involved in glucose metabolism in adipose tissue, skeletal muscle and liver. Acts as a ligand for integrin which is required for IGF2 signaling. Positively regulates myogenic transcription factor MYOD1 function by facilitating the recruitment of transcriptional coactivators, thereby controlling muscle terminal differentiation. Inhibits myoblast differentiation and modulates metabolism via increasing the mitochondrial respiration rate. Its function is as follows. Preptin undergoes glucose-mediated co-secretion with insulin, and acts as a physiological amplifier of glucose-mediated insulin secretion. Exhibits osteogenic properties by increasing osteoblast mitogenic activity through phosphoactivation of MAPK1 and MAPK3. In Neovison vison (American mink), this protein is Insulin-like growth factor 2.